A 193-amino-acid polypeptide reads, in one-letter code: Ribonuclease HII (193 aa).

The 179-residue stretch at 15–193 folds into the RNase H type-2 domain; that stretch reads CIVAGIDEAG…PYHRRSFRCC (179 aa). Residues Asp21, Glu22, and Asp112 each coordinate a divalent metal cation.

It belongs to the RNase HII family. Requires Mn(2+) as cofactor. Mg(2+) is required as a cofactor.

It is found in the cytoplasm. The catalysed reaction is Endonucleolytic cleavage to 5'-phosphomonoester.. Functionally, endonuclease that specifically degrades the RNA of RNA-DNA hybrids. This chain is Ribonuclease HII, found in Rickettsia rickettsii (strain Iowa).